Reading from the N-terminus, the 244-residue chain is Small ribosomal subunit protein eS4 (244 aa).

The S4 RNA-binding domain occupies 43–106; that stretch reads LPLLLVVRDV…DENYLVLFDE (64 aa).

The protein belongs to the eukaryotic ribosomal protein eS4 family.

This chain is Small ribosomal subunit protein eS4, found in Methanococcus maripaludis (strain C7 / ATCC BAA-1331).